Here is a 1036-residue protein sequence, read N- to C-terminus: Ubiquitin carboxyl-terminal hydrolase 48 (1036 aa).

The region spanning 89-421 (VGLTNLGASC…NAYMLVYRLQ (333 aa)) is the USP domain. Catalysis depends on Cys-98, which acts as the Nucleophile. His-353 serves as the catalytic Proton acceptor. DUSP domains lie at 460-554 (QSVD…KALC), 569-692 (NQLN…YKEC), and 712-825 (MIAK…RIEV). The interval 611–644 (DEQDGEAEQSNGKINGSPFSKDESKEEKKEEEEE) is disordered. A compositionally biased stretch (polar residues) spans 618 to 628 (EQSNGKINGSP). The disordered stretch occupies residues 881-924 (APELNVSSSETEEDKEEAKPDGEKDPDFNQSNGGTKRQKTSQQG). A phosphoserine mark is found at Ser-887, Ser-888, and Ser-889. The span at 896-907 (EEAKPDGEKDPD) shows a compositional bias: basic and acidic residues. A compositionally biased stretch (polar residues) spans 908–924 (FNQSNGGTKRQKTSQQG). One can recognise a Ubiquitin-like domain in the interval 930 to 1010 (KQVIRRSTRH…ILLKADEPIA (81 aa)). Position 957 is an N6-acetyllysine (Lys-957).

This sequence belongs to the peptidase C19 family. As to quaternary structure, interacts with TRAF2 and RELA. Interacts with GPS1. As to expression, present in the brain, in particular in the postsynaptic density and the dendritic lipid raft fractions (at protein level).

The protein resides in the cytoplasm. Its subcellular location is the nucleus. The protein localises to the cell projection. It localises to the cilium. The catalysed reaction is Thiol-dependent hydrolysis of ester, thioester, amide, peptide and isopeptide bonds formed by the C-terminal Gly of ubiquitin (a 76-residue protein attached to proteins as an intracellular targeting signal).. Functionally, deubiquitinase that recognizes and hydrolyzes the peptide bond at the C-terminal Gly of ubiquitin. Involved in the processing of polyubiquitin precursors as well as that of ubiquitinated proteins. Plays a role in the regulation of NF-kappa-B activation by TNF receptor superfamily via its interactions with RELA and TRAF2. May also play a regulatory role at postsynaptic sites. Plays an important role in cell cycle progression by deubiquitinating Aurora B/AURKB and thereby extending its stability. In the context of H. pylori infection, stabilizes nuclear RELA through deubiquitination, thereby promoting the transcriptional activity of RELA to prolong TNFAIP3 de novo synthesis. Consequently, TNFAIP3 suppresses caspase activity and apoptotic cell death. Also functions in the modulation of the ciliary and synaptic transport as well as cytoskeleton organization, which are key for photoreceptor function and homeostasis. To achieve this, stabilizes the levels of the retinal degeneration-associated proteins ARL3 and UNC119 using distinct mechanisms. Plays a positive role in pyroptosis by stabilizing gasdermin E/GSDME through removal of its 'Lys-48'-linked ubiquitination. This Rattus norvegicus (Rat) protein is Ubiquitin carboxyl-terminal hydrolase 48 (Usp48).